We begin with the raw amino-acid sequence, 353 residues long: Neutral protease 2 homolog AO090001000135 (353 aa).

A signal peptide spans 1–19 (MRFISVSSLLLALAPALNA). The propeptide occupies 20 to 176 (VPVEVAGSAQ…TQAVKILERR (157 aa)). Cystine bridges form between Cys182–Cys254 and Cys261–Cys279. His304 is a binding site for Zn(2+). Glu305 is a catalytic residue. 2 residues coordinate Zn(2+): His308 and Asp319.

Belongs to the peptidase M35 family. Zn(2+) is required as a cofactor.

The protein localises to the secreted. It carries out the reaction Preferential cleavage of bonds with hydrophobic residues in P1'. Also 3-Asn-|-Gln-4 and 8-Gly-|-Ser-9 bonds in insulin B chain.. Secreted metalloproteinase that allows assimilation of proteinaceous substrates. Shows high activities on basic nuclear substrates such as histone and protamine. The chain is Neutral protease 2 homolog AO090001000135 from Aspergillus oryzae (strain ATCC 42149 / RIB 40) (Yellow koji mold).